The sequence spans 915 residues: Phototropin-2 (915 aa).

Residues 1–10 (MERPRAPPSP) show a composition bias toward pro residues. 2 disordered regions span residues 1 to 62 (MERP…EFQD) and 84 to 118 (DDGI…GAFP). A phosphoserine mark is found at Ser9 and Ser22. The span at 27–43 (NPSSGKETHGSTSSSSK) shows a compositional bias: polar residues. The segment covering 93 to 107 (SEVERSKNMSRRSSE) has biased composition (basic and acidic residues). Positions 120 to 193 (VSQELKTALS…AKIRDCVKNG (74 aa)) constitute a PAS 1 domain. Position 121 is a phosphoserine (Ser121). Asn169 is a binding site for FMN. Cys170 bears the S-4a-FMN cysteine mark. FMN contacts are provided by Arg171, Gln174, Arg187, Asn202, Asn212, Gln233, and Lys238. The PAC 1 domain maps to 194 to 248 (KSYCGRLLNYKKDGTPFWNLLTVTPIKDDQGNTIKFIGMQVEVSKYTEGVNDKAL). The interval 281-344 (HRKSQVQESV…KSSNNRHEDL (64 aa)) is disordered. Composition is skewed to polar residues over residues 286-310 (VQES…GRQT) and 325-337 (RVST…LKSS). The residue at position 364 (Ser364) is a Phosphoserine. The 74-residue stretch at 376–449 (QGIDLATTLE…QKIRDAIRDQ (74 aa)) folds into the PAS 2 domain. Asn425 contributes to the FMN binding site. Position 426 is an S-4a-FMN cysteine (Cys426). 7 residues coordinate FMN: Arg427, Gln430, Arg443, Asn458, Asn468, Phe470, and Gln489. A PAC 2 domain is found at 450–504 (REITVQLINYTKSGKKFWNLFHLQPMRDQKGELQYFIGVQLDGSDHVEPLQNRLS). In terms of domain architecture, Protein kinase spans 577-864 (FKPIKPLGSG…ANEIKQHAFF (288 aa)). Residues 583 to 591 (LGSGDTGSV) and Lys606 each bind ATP. Asp702 (proton acceptor) is an active-site residue. The activation loop stretch occupies residues 720-774 (DFDLSFMTTCTPQLIIPAAPSKRRRSKSQPLPTFVAEPSTQSNSFVGTEEYIAPE).

The protein belongs to the protein kinase superfamily. AGC Ser/Thr protein kinase family. Homodimer. Interacts with PKS1, PKS2, RPT3 and PHOT1. Associates with CBC1 and CBC2. Binds to BHP. The cofactor is FMN. Post-translationally, autophosphorylated in response to blue light irradiation. In terms of processing, 2 molecules of FMN bind covalently to cysteines after exposure to blue light and are reversed in the dark. Expressed in leaves, stems and flowers, and to a lower extent in roots. Present in guard cells (at protein level).

The protein localises to the cell membrane. The catalysed reaction is L-seryl-[protein] + ATP = O-phospho-L-seryl-[protein] + ADP + H(+). It catalyses the reaction L-threonyl-[protein] + ATP = O-phospho-L-threonyl-[protein] + ADP + H(+). Autophosphorylation is inhibited by staurosporine, but not by tyrphostin 9, sphingosine, GW5074 and BML-265. Its function is as follows. Protein kinase that acts as a blue light photoreceptor in a signal-transduction pathway for photo-induced movements. Triggers the phosphorylation of AHA1 and AHA2 C-terminal penultimate Thr in guard cells to activate them and induce stomatal opening in response to blue light (BL). Also phosphorylates BLUS1, a kinase involved in stomatal opening. Mediates calcium spiking of extra- and intracellular origins in response to blue light. Involved in hypocotyl phototropism. Contributes to the chloroplast accumulation in low blue light and mediates their translocation (avoidance response) at high fluence. Regulates stomata opening and photomorphogenesis response of leaf tissue. Not involved in hypocotyl elongation inhibition, anthocyanin accumulation or cotyledon opening. In Arabidopsis thaliana (Mouse-ear cress), this protein is Phototropin-2.